A 120-amino-acid polypeptide reads, in one-letter code: Spermidine export protein MdtJ (120 aa).

Helical transmembrane passes span 1–21 (MFYW…TLSM), 31–51 (TGFI…AFAV), 54–74 (IALG…ITLF), and 81–101 (ESLS…IVLI).

It belongs to the drug/metabolite transporter (DMT) superfamily. Small multidrug resistance (SMR) (TC 2.A.7.1) family. MdtJ subfamily. As to quaternary structure, forms a complex with MdtI.

The protein localises to the cell inner membrane. Functionally, catalyzes the excretion of spermidine. The sequence is that of Spermidine export protein MdtJ from Klebsiella pneumoniae subsp. pneumoniae (strain ATCC 700721 / MGH 78578).